Reading from the N-terminus, the 73-residue chain is Tetrahydromethanopterin S-methyltransferase subunit G (73 aa).

A helical transmembrane segment spans residues 48–68 (IGILYGAVVGLLLFLIYVSVS).

This sequence belongs to the MtrG family. The complex is composed of 8 subunits; MtrA, MtrB, MtrC, MtrD, MtrE, MtrF, MtrG and MtrH.

It is found in the cell membrane. It catalyses the reaction 5-methyl-5,6,7,8-tetrahydromethanopterin + coenzyme M + 2 Na(+)(in) = 5,6,7,8-tetrahydromethanopterin + methyl-coenzyme M + 2 Na(+)(out). The protein operates within one-carbon metabolism; methanogenesis from CO(2); methyl-coenzyme M from 5,10-methylene-5,6,7,8-tetrahydromethanopterin: step 2/2. Functionally, part of a complex that catalyzes the formation of methyl-coenzyme M and tetrahydromethanopterin from coenzyme M and methyl-tetrahydromethanopterin. This is an energy-conserving, sodium-ion translocating step. This is Tetrahydromethanopterin S-methyltransferase subunit G from Methanosarcina acetivorans (strain ATCC 35395 / DSM 2834 / JCM 12185 / C2A).